We begin with the raw amino-acid sequence, 122 residues long: Basic phospholipase A2 homolog Gln49-PLA2 (122 aa).

Cystine bridges form between Cys26-Cys115, Cys28-Cys44, Cys43-Cys95, Cys49-Cys122, Cys50-Cys88, Cys57-Cys81, and Cys75-Cys86.

The protein belongs to the phospholipase A2 family. Group II subfamily. Q49 sub-subfamily. As to quaternary structure, monomer. As to expression, expressed by the venom gland.

The protein localises to the secreted. In terms of biological role, snake venom phospholipase A2 (PLA2) homolog that shows local myotoxicity, apparent anticoagulant activity, and neurotoxicity. Shows analgesic effect on mice due to a decrease of action potentials and nerve conduction velocity. These effects are caused by inhibition of voltage-gated ion channels (potassium (Kv) and sodium (Nav)). In addition, analgesic effects are antagonized by naloxone, implying the mechanism of action is correlated with opioid receptors (probably indirectly). Does not show detectable PLA2 activity on egg yolk phospholipids. The chain is Basic phospholipase A2 homolog Gln49-PLA2 from Gloydius ussuriensis (Ussuri mamushi).